The chain runs to 91 residues: Small ribosomal subunit protein uS15 (91 aa).

Belongs to the universal ribosomal protein uS15 family. Part of the 30S ribosomal subunit. Forms a bridge to the 50S subunit in the 70S ribosome, contacting the 23S rRNA.

Functionally, one of the primary rRNA binding proteins, it binds directly to 16S rRNA where it helps nucleate assembly of the platform of the 30S subunit by binding and bridging several RNA helices of the 16S rRNA. Its function is as follows. Forms an intersubunit bridge (bridge B4) with the 23S rRNA of the 50S subunit in the ribosome. The sequence is that of Small ribosomal subunit protein uS15 from Rickettsia felis (strain ATCC VR-1525 / URRWXCal2) (Rickettsia azadi).